Consider the following 270-residue polypeptide: MLKGLYTATSAMIAQQRRTEMLSNNIANANTSGYKADQGSMRAFPEMLLSRIESKSPAGTSRTEIGSVNTGVYMQELKPLFTQGSLKSTDQPTDIALIENQVPMSAETNEKAALFYPVQTADGIRYSKSSTFSLNENNQLTINGRPILSTDRQPITVDNENFTVSENGTVTTNGRTAGQIDVRMAEDVRNLKRDGNDLYSTADGNDLPSAAGNNQVAYSLKQGVSELSNVDVTSAYTEMTEAYRSFEANQKVIQAYDKSMDKAANEIGKI.

This sequence belongs to the flagella basal body rod proteins family.

Functionally, not required for motility. The polypeptide is Flagellar hook-basal body complex protein FlhO (flhO) (Bacillus subtilis (strain 168)).